We begin with the raw amino-acid sequence, 598 residues long: Thiamine transporter (598 aa).

Topologically, residues 1–41 are cytoplasmic; sequence MSFGSKVSRALRFLEIPVKDRASVSFLKNPDLQPIKSANQT. The chain crosses the membrane as a helical span at residues 42–62; it reads WGFWSNFAYWGVMSFSVGTWM. At 63-73 the chain is on the extracellular side; it reads SASSALGVGLS. Residues 74-94 traverse the membrane as a helical segment; that stretch reads YPETIGTFIVGDVLTIIFTLA. Topologically, residues 95–111 are cytoplasmic; sequence NSCPGYDWKVGFTLAQR. A helical membrane pass occupies residues 112–132; sequence FVFGIYGSAFGIIIRILMSIV. Over 133–173 the chain is Extracellular; the sequence is NYGSNAWVGGLCINMILDSWSHHYLHLPNTLSSKVAMTTKE. The helical transmembrane segment at 174 to 194 threads the bilayer; it reads LIGFIIFHVLTAFCYLMKPYH. Residues 195–197 lie on the Cytoplasmic side of the membrane; the sequence is MNY. The chain crosses the membrane as a helical span at residues 198 to 218; the sequence is ILIWSCVATFFSMLGMVIYLA. Residues 219–240 are Extracellular-facing; the sequence is KQAHGVGELFTSTKSTATGSTK. The chain crosses the membrane as a helical span at residues 241–261; sequence AWAWVYMISYWFGSVSPGSTN. Over 262–274 the chain is Cytoplasmic; it reads QSDYSRFGSSNWA. A helical membrane pass occupies residues 275–295; sequence IWAGTICALLIPTTLIPVFGV. Residues 296–332 are Extracellular-facing; that stretch reads IGASTCDKLYGEQYWMPMDIFNHWLTTNYSAGARAGA. Residues 333-353 traverse the membrane as a helical segment; that stretch reads FFCGLSFVLSQMSYTISNCGF. Topologically, residues 354 to 371 are cytoplasmic; that stretch reads ASGMDLAGLLPKYVDIKR. A helical membrane pass occupies residues 372-392; sequence GALFAACVSWACLPWNFYNSS. Residues 393-394 are Extracellular-facing; it reads ST. Residues 395 to 415 form a helical membrane-spanning segment; the sequence is FLTVMSSFGVVMTPIISVMIC. At 416-446 the chain is on the cytoplasmic side; it reads DNFLIRKRQYSITNAFILKGEYYFTKGVNWR. A helical membrane pass occupies residues 447–467; sequence AIVAWVCGMTPGLPGIAWEVN. Over 468–483 the chain is Extracellular; that stretch reads NDYFHNTGIVNFFYGD. The chain crosses the membrane as a helical span at residues 484–504; the sequence is SFFSFLISFFVYWGLCLLFPF. Over 505–598 the chain is Cytoplasmic; it reads KITVKHDDKD…QSSTASEKAA (94 aa). Ser-560 is subject to Phosphoserine. The disordered stretch occupies residues 574–598; that stretch reads NTNEFEIVHHKNNEKQSSTASEKAA. Residues 588 to 598 are compositionally biased toward polar residues; that stretch reads KQSSTASEKAA.

It belongs to the purine-cytosine permease (2.A.39) family.

The protein resides in the membrane. Its function is as follows. Responsible for intake of thiamine. The protein is Thiamine transporter (THI7) of Saccharomyces cerevisiae (strain ATCC 204508 / S288c) (Baker's yeast).